Consider the following 246-residue polypeptide: Small ribosomal subunit protein uS2 (246 aa).

Residues 224–246 (AKQGEESAETEAKEAETTETTTA) form a disordered region. A compositionally biased stretch (basic and acidic residues) spans 225 to 239 (KQGEESAETEAKEAE).

It belongs to the universal ribosomal protein uS2 family.

The chain is Small ribosomal subunit protein uS2 from Bacillus licheniformis (strain ATCC 14580 / DSM 13 / JCM 2505 / CCUG 7422 / NBRC 12200 / NCIMB 9375 / NCTC 10341 / NRRL NRS-1264 / Gibson 46).